We begin with the raw amino-acid sequence, 111 residues long: Gastrula zinc finger protein XlCGF32.1 (111 aa).

4 C2H2-type zinc fingers span residues 6-28, 34-56, 62-84, and 89-111; these read FDCT…FLCH, FVCV…LRIH, SVCP…MRIH, and FMCS…LQIH.

Belongs to the krueppel C2H2-type zinc-finger protein family.

The protein resides in the nucleus. Functionally, may be involved in transcriptional regulation. This is Gastrula zinc finger protein XlCGF32.1 from Xenopus laevis (African clawed frog).